A 419-amino-acid polypeptide reads, in one-letter code: S-adenosylmethionine synthase (419 aa).

Position 15 (H15) interacts with ATP. D17 serves as a coordination point for Mg(2+). A K(+)-binding site is contributed by E43. E56 and Q99 together coordinate L-methionine. The tract at residues 99–109 (QSPEIAQGVSC) is flexible loop. ATP is bound by residues 173 to 175 (DGK), 253 to 254 (RF), D262, 268 to 269 (RK), A285, and K289. Position 262 (D262) interacts with L-methionine. Residue K293 coordinates L-methionine.

The protein belongs to the AdoMet synthase family. In terms of assembly, homotetramer; dimer of dimers. Requires Mg(2+) as cofactor. The cofactor is K(+).

Its subcellular location is the cytoplasm. It carries out the reaction L-methionine + ATP + H2O = S-adenosyl-L-methionine + phosphate + diphosphate. The protein operates within amino-acid biosynthesis; S-adenosyl-L-methionine biosynthesis; S-adenosyl-L-methionine from L-methionine: step 1/1. Functionally, catalyzes the formation of S-adenosylmethionine (AdoMet) from methionine and ATP. The overall synthetic reaction is composed of two sequential steps, AdoMet formation and the subsequent tripolyphosphate hydrolysis which occurs prior to release of AdoMet from the enzyme. The sequence is that of S-adenosylmethionine synthase from Gloeobacter violaceus (strain ATCC 29082 / PCC 7421).